We begin with the raw amino-acid sequence, 230 residues long: Leucyl/phenylalanyl-tRNA--protein transferase (230 aa).

Belongs to the L/F-transferase family.

It is found in the cytoplasm. The catalysed reaction is N-terminal L-lysyl-[protein] + L-leucyl-tRNA(Leu) = N-terminal L-leucyl-L-lysyl-[protein] + tRNA(Leu) + H(+). The enzyme catalyses N-terminal L-arginyl-[protein] + L-leucyl-tRNA(Leu) = N-terminal L-leucyl-L-arginyl-[protein] + tRNA(Leu) + H(+). It carries out the reaction L-phenylalanyl-tRNA(Phe) + an N-terminal L-alpha-aminoacyl-[protein] = an N-terminal L-phenylalanyl-L-alpha-aminoacyl-[protein] + tRNA(Phe). In terms of biological role, functions in the N-end rule pathway of protein degradation where it conjugates Leu, Phe and, less efficiently, Met from aminoacyl-tRNAs to the N-termini of proteins containing an N-terminal arginine or lysine. The sequence is that of Leucyl/phenylalanyl-tRNA--protein transferase from Rhodopseudomonas palustris (strain BisB18).